Here is a 105-residue protein sequence, read N- to C-terminus: Cell division protein FtsB (105 aa).

Over 1–3 the chain is Cytoplasmic; it reads MRL. The chain crosses the membrane as a helical span at residues 4–21; sequence FTLILMVVLALVQRQLWF. Topologically, residues 22–105 are periplasmic; the sequence is GKNGLVEYRQ…NKQSSLPKSD (84 aa). Positions 28-74 form a coiled coil; sequence EYRQVSENLLRRQADNQKLQERNMLLKEDIEDLKSGLEAIEELARND.

Belongs to the FtsB family. As to quaternary structure, part of a complex composed of FtsB, FtsL and FtsQ.

Its subcellular location is the cell inner membrane. Its function is as follows. Essential cell division protein. May link together the upstream cell division proteins, which are predominantly cytoplasmic, with the downstream cell division proteins, which are predominantly periplasmic. The sequence is that of Cell division protein FtsB from Tolumonas auensis (strain DSM 9187 / NBRC 110442 / TA 4).